The following is a 311-amino-acid chain: Glycosyltransferase 6 domain-containing protein 1 (311 aa).

Over 1–5 (MKAKR) the chain is Cytoplasmic. Residues 6–26 (RILLQLLTFCLFLLLLAKIHF) traverse the membrane as a helical; Signal-anchor for type II membrane protein segment. The Lumenal segment spans residues 27–311 (RNHQEEELLL…KIAHHPIDTL (285 aa)). Asparagine 77 is a glycosylation site (N-linked (GlcNAc...) asparagine). Substrate is bound by residues 85 to 90 (FAVGSL), 176 to 178 (NIN), and 198 to 201 (HPWW). Glutamate 266 serves as the catalytic Nucleophile.

Belongs to the glycosyltransferase 6 family. Mn(2+) serves as cofactor.

It is found in the membrane. The protein is Glycosyltransferase 6 domain-containing protein 1 (Glt6d1) of Mus musculus (Mouse).